A 145-amino-acid chain; its full sequence is Sec-independent protein translocase protein TatB (145 aa).

A helical transmembrane segment spans residues 1 to 21 (MLDVGMTELLCFAIIAILVLG).

The protein belongs to the TatB family. In terms of assembly, the Tat system comprises two distinct complexes: a TatABC complex, containing multiple copies of TatA, TatB and TatC subunits, and a separate TatA complex, containing only TatA subunits. Substrates initially bind to the TatABC complex, which probably triggers association of the separate TatA complex to form the active translocon.

It localises to the cell inner membrane. Part of the twin-arginine translocation (Tat) system that transports large folded proteins containing a characteristic twin-arginine motif in their signal peptide across membranes. Together with TatC, TatB is part of a receptor directly interacting with Tat signal peptides. TatB may form an oligomeric binding site that transiently accommodates folded Tat precursor proteins before their translocation. The sequence is that of Sec-independent protein translocase protein TatB from Acinetobacter baumannii (strain ATCC 17978 / DSM 105126 / CIP 53.77 / LMG 1025 / NCDC KC755 / 5377).